The primary structure comprises 378 residues: Queuine tRNA-ribosyltransferase (378 aa).

Asp89 acts as the Proton acceptor in catalysis. Substrate is bound by residues 89–93 (DSGGF), Asp143, Gln187, and Gly214. Residues 245–251 (GVGKPED) form an RNA binding region. Asp264 acts as the Nucleophile in catalysis. The tract at residues 269–273 (TRNAR) is RNA binding; important for wobble base 34 recognition. Zn(2+) is bound by residues Cys302, Cys304, Cys307, and His333.

Belongs to the queuine tRNA-ribosyltransferase family. As to quaternary structure, homodimer. Within each dimer, one monomer is responsible for RNA recognition and catalysis, while the other monomer binds to the replacement base PreQ1. It depends on Zn(2+) as a cofactor.

The catalysed reaction is 7-aminomethyl-7-carbaguanine + guanosine(34) in tRNA = 7-aminomethyl-7-carbaguanosine(34) in tRNA + guanine. It participates in tRNA modification; tRNA-queuosine biosynthesis. In terms of biological role, catalyzes the base-exchange of a guanine (G) residue with the queuine precursor 7-aminomethyl-7-deazaguanine (PreQ1) at position 34 (anticodon wobble position) in tRNAs with GU(N) anticodons (tRNA-Asp, -Asn, -His and -Tyr). Catalysis occurs through a double-displacement mechanism. The nucleophile active site attacks the C1' of nucleotide 34 to detach the guanine base from the RNA, forming a covalent enzyme-RNA intermediate. The proton acceptor active site deprotonates the incoming PreQ1, allowing a nucleophilic attack on the C1' of the ribose to form the product. After dissociation, two additional enzymatic reactions on the tRNA convert PreQ1 to queuine (Q), resulting in the hypermodified nucleoside queuosine (7-(((4,5-cis-dihydroxy-2-cyclopenten-1-yl)amino)methyl)-7-deazaguanosine). This chain is Queuine tRNA-ribosyltransferase, found in Aeromonas hydrophila subsp. hydrophila (strain ATCC 7966 / DSM 30187 / BCRC 13018 / CCUG 14551 / JCM 1027 / KCTC 2358 / NCIMB 9240 / NCTC 8049).